The following is a 234-amino-acid chain: ATP-dependent dethiobiotin synthetase BioD (234 aa).

An ATP-binding site is contributed by Gly14–Ile19. Position 18 (Thr18) interacts with Mg(2+). Lys39 is an active-site residue. Ser43 lines the substrate pocket. ATP contacts are provided by residues Asp56, Glu118 to Gly121, Asn178 to His179, and Pro208 to Leu210. Mg(2+) is bound by residues Asp56 and Glu118.

The protein belongs to the dethiobiotin synthetase family. Homodimer. Mg(2+) serves as cofactor.

The protein resides in the cytoplasm. The catalysed reaction is (7R,8S)-7,8-diammoniononanoate + CO2 + ATP = (4R,5S)-dethiobiotin + ADP + phosphate + 3 H(+). It functions in the pathway cofactor biosynthesis; biotin biosynthesis; biotin from 7,8-diaminononanoate: step 1/2. Its function is as follows. Catalyzes a mechanistically unusual reaction, the ATP-dependent insertion of CO2 between the N7 and N8 nitrogen atoms of 7,8-diaminopelargonic acid (DAPA, also called 7,8-diammoniononanoate) to form a ureido ring. The protein is ATP-dependent dethiobiotin synthetase BioD of Marinobacter nauticus (strain ATCC 700491 / DSM 11845 / VT8) (Marinobacter aquaeolei).